The chain runs to 246 residues: UPF0736 protein GK0808 (246 aa).

It belongs to the UPF0736 family.

The polypeptide is UPF0736 protein GK0808 (Geobacillus kaustophilus (strain HTA426)).